The following is a 396-amino-acid chain: Putative amidohydrolase YhaA (396 aa).

Asp85 is an active-site residue. The Proton acceptor role is filled by Glu143. Positions 144, 182, and 368 each coordinate Zn(2+).

It belongs to the peptidase M20A family. Zn(2+) is required as a cofactor. Co(2+) serves as cofactor.

The protein is Putative amidohydrolase YhaA (yhaA) of Bacillus subtilis (strain 168).